We begin with the raw amino-acid sequence, 438 residues long: Transmembrane protein 184C (438 aa).

The next 7 membrane-spanning stretches (helical) occupy residues 17–37 (LVAVIYLVSIVVAVPLCVWEL), 48–68 (AWFIAGIFLLLTIPISLWVIL), 86–106 (ILWMVPIYSLDSWIALKYPGI), 179–199 (YTVVRPFTTIVALICELLGIY), 212–232 (YLVIINNMSQLFAMYCLLLFY), 254–274 (VVFVSFWQAVVIALLVKVGVI), and 287–307 (AVATGLQDFIICIEMFLAAIA). The disordered stretch occupies residues 358 to 438 (PRKKLFPEDQ…KEPSDKSVDS (81 aa)). 2 stretches are compositionally biased toward low complexity: residues 374-390 (SLLSSSSQDAISIASSM) and 404-413 (TVTPQTTPTT). Residue Ser422 is modified to Phosphoserine. Residues 425–438 (IGEKKEPSDKSVDS) show a composition bias toward basic and acidic residues.

The protein belongs to the TMEM184 family.

The protein resides in the membrane. Its function is as follows. Possible tumor suppressor which may play a role in cell growth. In Pongo abelii (Sumatran orangutan), this protein is Transmembrane protein 184C (TMEM184C).